An 893-amino-acid polypeptide reads, in one-letter code: Sulfate permease 2 (893 aa).

The disordered stretch occupies residues 1–25 (MSREGYPNFEEVEIPDFQETNNTVP). The Cytoplasmic portion of the chain corresponds to 1-131 (MSREGYPNFE…VFPIINWLPH (131 aa)). The chain crosses the membrane as a helical span at residues 132-152 (YNFSWFTADLIAGITIGCVLV). The Extracellular segment spans residues 153–163 (PQSMSYAQVAT). The helical transmembrane segment at 164 to 184 (LPAQYGLYSSFIGAYSYSFFA) threads the bilayer. The Cytoplasmic segment spans residues 185-188 (TSKD). Residues 189–209 (VCIGPVAVMSLQTAKVIADVT) traverse the membrane as a helical segment. The Extracellular segment spans residues 210–221 (AKYPDGDSAITG). A helical membrane pass occupies residues 222–242 (PVIATTLALLCGIISAAVGFL). Residues 243–244 (RL) are Cytoplasmic-facing. A helical membrane pass occupies residues 245–265 (GFLVELISLNAVAGFMTGSAF). Topologically, residues 266–305 (NILWGQVPALMGYNSLVNTRAATYKVVIETLKHLPDTKLD) are extracellular. The chain crosses the membrane as a helical span at residues 306–326 (AVFGLIPLFLLYVWKWWCGTY). At 327–350 (GPRLNDRYNSKNPRLHKIIKWTYF) the chain is on the cytoplasmic side. Residues 351-371 (YAQASRNGIIIIVFTCIGWAI) form a helical membrane-spanning segment. The Extracellular segment spans residues 372–399 (TRGKSKSERPISILGSVPSGLKEVGVFH). A helical membrane pass occupies residues 400 to 420 (VPPGLMSKLGPNLPASIIVLL). The Cytoplasmic segment spans residues 421–443 (LEHIAISKSFGRINDYKVVPDQE). A helical transmembrane segment spans residues 444–464 (LIAIGVSNLLGTFFNAYPATG). The Extracellular segment spans residues 465–483 (SFSRSALKAKCNVRTPLSG). The chain crosses the membrane as a helical span at residues 484–504 (LFSGSCVLLALYCLTGAFFYI). Over 505–532 (PKATLSAVIIHAVSDLLASYQTTWNFWK) the chain is Cytoplasmic. The helical transmembrane segment at 533–551 (MNPLDFICFIVTVLITVFA) threads the bilayer. At 552-559 (SIEDGIYF) the chain is on the extracellular side. The helical transmembrane segment at 560 to 580 (AMCWSCAMLILKVAFPAGKFL) threads the bilayer. Residues 581–893 (GRVEVAEVTD…DIPDFAKWDI (313 aa)) lie on the Cytoplasmic side of the membrane. The STAS domain maps to 676-854 (DVQILPPPDG…SIVAGHTSYH (179 aa)).

It belongs to the SLC26A/SulP transporter (TC 2.A.53) family.

The protein localises to the membrane. In terms of biological role, high affinity uptake of sulfate into the cell. The chain is Sulfate permease 2 (SUL2) from Saccharomyces cerevisiae (strain ATCC 204508 / S288c) (Baker's yeast).